The primary structure comprises 533 residues: 2-isopropylmalate synthase (533 aa).

The 262-residue stretch at 8-269 folds into the Pyruvate carboxyltransferase domain; that stretch reads ILIFDTTLRD…YFNPFLGRPA (262 aa). Mn(2+) contacts are provided by D17, H208, H210, and N244. The interval 408–533 is regulatory domain; that stretch reads RLERVQVSCG…REHPPVVASL (126 aa).

It belongs to the alpha-IPM synthase/homocitrate synthase family. LeuA type 1 subfamily. Homodimer. It depends on Mn(2+) as a cofactor.

The protein resides in the cytoplasm. It carries out the reaction 3-methyl-2-oxobutanoate + acetyl-CoA + H2O = (2S)-2-isopropylmalate + CoA + H(+). It functions in the pathway amino-acid biosynthesis; L-leucine biosynthesis; L-leucine from 3-methyl-2-oxobutanoate: step 1/4. Its function is as follows. Catalyzes the condensation of the acetyl group of acetyl-CoA with 3-methyl-2-oxobutanoate (2-ketoisovalerate) to form 3-carboxy-3-hydroxy-4-methylpentanoate (2-isopropylmalate). This chain is 2-isopropylmalate synthase, found in Synechocystis sp. (strain ATCC 27184 / PCC 6803 / Kazusa).